Reading from the N-terminus, the 889-residue chain is Extended synaptotagmin-3 (889 aa).

The disordered stretch occupies residues Met-1 to Ala-65. The Cytoplasmic segment spans residues Met-1–Gly-66. Composition is skewed to basic and acidic residues over residues Thr-17–Glu-28 and Pro-41–Arg-58. Transmembrane regions (helical) follow at residues Glu-67 to Tyr-91 and Leu-92 to Phe-112. Topologically, residues Trp-113–Ser-889 are cytoplasmic. The region spanning Asp-155–Ser-333 is the SMP-LTD domain. 2 consecutive C2 domains span residues Pro-331–Phe-452 and Trp-468–Lys-618. Lys-363, Asp-364, Asp-376, Asp-423, Glu-424, Asp-425, Asp-427, Asp-429, and Asp-430 together coordinate Ca(2+). A disordered region spans residues Ser-649–Ser-724. Over residues His-658 to Ala-671 the composition is skewed to basic residues. 2 stretches are compositionally biased toward low complexity: residues His-672–Gln-682 and Ile-691–Thr-714. One can recognise a C2 3 domain in the interval Met-757–Phe-879. Positions Arg-804–Lys-811 are required for phosphatidylinositol 4,5-bisphosphate-dependent location at the cell membrane.

This sequence belongs to the extended synaptotagmin family.

It is found in the cell membrane. The protein resides in the endoplasmic reticulum membrane. In terms of biological role, tethers the endoplasmic reticulum to the cell membrane and promotes the formation of appositions between the endoplasmic reticulum and the cell membrane. Binds glycerophospholipids in a barrel-like domain and may play a role in cellular lipid transport. The chain is Extended synaptotagmin-3 (esyt3) from Xenopus tropicalis (Western clawed frog).